The chain runs to 202 residues: MFSSKRYLNSFGWEEGNALKEGGLTKPILTSRKYNTHGLGAKHDIADQWWDNVFSAQLQSIQVNTDNGKVAVQSNGVSTKLRMAKYHSKYSALSSVFRYAGRLCGTFEEDLVDKSLDSSVSPVSSKKVKVRKTSGKESSKREKSKKKKEKKEKKDKLKKKSKRLKLDDSHTQKRKRKVRDKESKKSSKSGLKKVSGTKKVKA.

The segment at 118–202 (SSVSPVSSKK…KVSGTKKVKA (85 aa)) is disordered. Ser-121 is subject to Phosphoserine. 2 stretches are compositionally biased toward basic residues: residues 142–163 (EKSK…KSKR) and 186–202 (SSKS…KVKA).

It is found in the nucleus. The protein resides in the nucleolus. This is an uncharacterized protein from Schizosaccharomyces pombe (strain 972 / ATCC 24843) (Fission yeast).